Reading from the N-terminus, the 311-residue chain is tRNA dimethylallyltransferase (311 aa).

Position 11–18 (11–18 (GPTASGKS)) interacts with ATP. A substrate-binding site is contributed by 13 to 18 (TASGKS). Interaction with substrate tRNA stretches follow at residues 36-39 (DSMQ) and 160-164 (QRLIR).

Belongs to the IPP transferase family. As to quaternary structure, monomer. Mg(2+) serves as cofactor.

It catalyses the reaction adenosine(37) in tRNA + dimethylallyl diphosphate = N(6)-dimethylallyladenosine(37) in tRNA + diphosphate. Functionally, catalyzes the transfer of a dimethylallyl group onto the adenine at position 37 in tRNAs that read codons beginning with uridine, leading to the formation of N6-(dimethylallyl)adenosine (i(6)A). The protein is tRNA dimethylallyltransferase of Rickettsia typhi (strain ATCC VR-144 / Wilmington).